The chain runs to 75 residues: Cytochrome c oxidase assembly factor 5 (75 aa).

Residues glutamine 28–arginine 66 enclose the CHCH domain. The Cx10C motif signature appears at cysteine 31–cysteine 42. 2 disulfide bridges follow: cysteine 31-cysteine 58 and cysteine 42-cysteine 48. The short motif at cysteine 48–cysteine 58 is the Cx9C motif element.

Belongs to the PET191 family.

Its function is as follows. Involved in an early step of the mitochondrial complex IV assembly process. In Xenopus laevis (African clawed frog), this protein is Cytochrome c oxidase assembly factor 5 (coa5).